The following is a 77-amino-acid chain: Secapin-2 (77 aa).

The first 32 residues, 1-32 (MKNYSKNATYLITVLLFSFVTMLLIIPSKCEA), serve as a signal peptide directing secretion. Positions 33-52 (VSNDMQPLEARTADLVQQPR) are excised as a propeptide. A disulfide bridge connects residues C61 and C72. P77 carries the post-translational modification Proline amide.

This sequence belongs to the secapin family. In terms of tissue distribution, expressed by the venom gland.

It is found in the secreted. Serine protease inhibitor which exhibits antifibrinolytic, antielastolytic and antimicrobial activities. Displays antimicrobial activity against bacteria and fungi. Likely functions in the innate immune response to microbial infection and possibly in the venom, as an antifibrinolytic agent. Induces hyperalgesia and edema mediated by leukotrienes when injected into mice. Does not induce hemolytic activity, mast cell degranulation, or chemotactic activity for polymorphonucleated leukocytes (PMNL). The protein is Secapin-2 of Apis mellifera (Honeybee).